The primary structure comprises 432 residues: MGNNVVVLGTQWGDEGKGKIVDLLTERAKYVVRYQGGHNAGHTLVINGEKTVLHLIPSGILRENVISIIGNGVVLSPSALMKEMQELEDRGIPVRERLLLSEACPLILDYHVALDNAREKARGAKAIGTTGRGIGPAYEDKVARRGLRVGDLFDKATFAEKLKEVMEYHNFQLVNFYKVDAVDYQKVLDDVMAIADILTGMVVDVSDLLDQARKRGDFVMFEGAQGTLLDIDHGTYPYVTSSNTTAGGVATGSGLGPRYVDYVLGIIKAYSTRVGAGPFPTELFDETGEFLCKQGNEYGATTGRRRRTGWLDSVAIRRAVQINSLSGFCLTKLDVLDGLKEVKICVAYRMPDGREVTTTPLAADDWQGIEPIYETMPGWSESTFGVKDRSGLPAAALNYIKRIEELTGVPIDIISTGPDRTETMILRDPFDA.

Residues 13–19 and 41–43 each bind GTP; these read GDEGKGK and GHT. The active-site Proton acceptor is D14. Positions 14 and 41 each coordinate Mg(2+). IMP-binding positions include 14-17, 39-42, T130, R144, Q225, T240, and R304; these read DEGK and NAGH. H42 functions as the Proton donor in the catalytic mechanism. Residue 300–306 participates in substrate binding; that stretch reads ATTGRRR. Residues R306, 332 to 334, and 415 to 417 each bind GTP; these read KLD and STG.

The protein belongs to the adenylosuccinate synthetase family. As to quaternary structure, homodimer. It depends on Mg(2+) as a cofactor.

Its subcellular location is the cytoplasm. The enzyme catalyses IMP + L-aspartate + GTP = N(6)-(1,2-dicarboxyethyl)-AMP + GDP + phosphate + 2 H(+). It functions in the pathway purine metabolism; AMP biosynthesis via de novo pathway; AMP from IMP: step 1/2. In terms of biological role, plays an important role in the de novo pathway of purine nucleotide biosynthesis. Catalyzes the first committed step in the biosynthesis of AMP from IMP. This is Adenylosuccinate synthetase from Salmonella arizonae (strain ATCC BAA-731 / CDC346-86 / RSK2980).